Here is a 379-residue protein sequence, read N- to C-terminus: Queuine tRNA-ribosyltransferase (379 aa).

Aspartate 91 acts as the Proton acceptor in catalysis. Substrate-binding positions include aspartate 91 to phenylalanine 95, aspartate 145, glutamine 189, and glycine 216. The segment at glycine 247 to aspartate 253 is RNA binding. The active-site Nucleophile is the aspartate 266. Positions threonine 271–arginine 275 are RNA binding; important for wobble base 34 recognition. Positions 304, 306, 309, and 335 each coordinate Zn(2+).

This sequence belongs to the queuine tRNA-ribosyltransferase family. In terms of assembly, homodimer. Within each dimer, one monomer is responsible for RNA recognition and catalysis, while the other monomer binds to the replacement base PreQ1. It depends on Zn(2+) as a cofactor.

The enzyme catalyses 7-aminomethyl-7-carbaguanine + guanosine(34) in tRNA = 7-aminomethyl-7-carbaguanosine(34) in tRNA + guanine. It participates in tRNA modification; tRNA-queuosine biosynthesis. Catalyzes the base-exchange of a guanine (G) residue with the queuine precursor 7-aminomethyl-7-deazaguanine (PreQ1) at position 34 (anticodon wobble position) in tRNAs with GU(N) anticodons (tRNA-Asp, -Asn, -His and -Tyr). Catalysis occurs through a double-displacement mechanism. The nucleophile active site attacks the C1' of nucleotide 34 to detach the guanine base from the RNA, forming a covalent enzyme-RNA intermediate. The proton acceptor active site deprotonates the incoming PreQ1, allowing a nucleophilic attack on the C1' of the ribose to form the product. After dissociation, two additional enzymatic reactions on the tRNA convert PreQ1 to queuine (Q), resulting in the hypermodified nucleoside queuosine (7-(((4,5-cis-dihydroxy-2-cyclopenten-1-yl)amino)methyl)-7-deazaguanosine). In Vibrio cholerae serotype O1 (strain ATCC 39315 / El Tor Inaba N16961), this protein is Queuine tRNA-ribosyltransferase.